The primary structure comprises 20 residues: Cuticle-degrading protease-like protein (20 aa).

The tract at residues 1–20 (AIVEQQGAPXGLGRIINKXK) is disordered.

It belongs to the peptidase S8 family.

It localises to the secreted. Its function is as follows. Capable of breaching the insect cuticle. This is Cuticle-degrading protease-like protein from Metacordyceps chlamydosporia (Nematophagous fungus).